A 511-amino-acid polypeptide reads, in one-letter code: MFARAVSRKTMTGLLAGSRVLLASQFTMADRQVHTPLEPVQRQKYANNENLLKDHVEKIDPEVFNIMKNEKSRQRRGLELIASENFTSKAVMDALGSAMCNKYSEGYPGARYYGGNEFIDQMEILCQKRALEVFGLDPAKWGVNVQSLSGSPANFAVYTALVGANGRIMGLDLPDGGHLTHGFFTPARKVSATSEFFQSMPYKVDAQSGLIDYDKLEENAMLFRPKVLIAGVSCYARHLDYERFRKIATKAGAYLMSDMAHISGLVAAGLIPSPFEYSDVVTTTTHKSLRGPRGAMIFYRKGVRSVNAKGVETLYDLEEKINSAVFPGLQGGPHNHTIAGIAVALKQCLSEDFVQYGEQILKNAKTLAERLKKHGYSLATGGTDNHLLLVDLRPIGVEGARAEHILDLAHIACNKNTCPGDVSALRPGGIRLGTPALTSRGFKEQDFEKVGDFIHEGVQIAKKYNAEAGKTLKDFKAFTATNEQFKQEVAELAKRVEEFSGKFEIPGNDLF.

An N6-(pyridoxal phosphate)lysine modification is found at Lys287.

The protein belongs to the SHMT family. As to quaternary structure, homotetramer. Requires pyridoxal 5'-phosphate as cofactor.

The catalysed reaction is (6R)-5,10-methylene-5,6,7,8-tetrahydrofolate + glycine + H2O = (6S)-5,6,7,8-tetrahydrofolate + L-serine. It functions in the pathway one-carbon metabolism; tetrahydrofolate interconversion. Its function is as follows. Interconversion of serine and glycine. The chain is Serine hydroxymethyltransferase from Caenorhabditis briggsae.